Here is a 503-residue protein sequence, read N- to C-terminus: Cytochrome P450 3A9 (503 aa).

Residue Cys442 coordinates heme.

It belongs to the cytochrome P450 family. It depends on heme as a cofactor. As to expression, mainly expressed in olfactory epithelium.

The protein localises to the endoplasmic reticulum membrane. The protein resides in the microsome membrane. The catalysed reaction is an organic molecule + reduced [NADPH--hemoprotein reductase] + O2 = an alcohol + oxidized [NADPH--hemoprotein reductase] + H2O + H(+). This isozyme seems to be implicated in olfaction. Active in the demethylation of erythromycin as well as benzphetamine. The chain is Cytochrome P450 3A9 (Cyp3a9) from Rattus norvegicus (Rat).